The following is a 469-amino-acid chain: MSFRLSSGSRRLCSPAGSGQLTGGRTGFRAGNACGGLGAGSSFSGPLGSVSSRGSFSHGGGGLGSGVCTGFLENEHGLLPGNEKVTLQNLNDRLASYLDHVCTLEEANADLEQKIKGWYEKYGPGSGRQLAYDCSKYFSVTEDLKRQIISVTTCNASIALQNENARLTADDFRLKYENELALNQSVEADINGLHRVMEELTLCTSDLEIQCEALSEELTCLKKNHQEEMKVMQGAAGGNVNVEINAAPGVDLTVLLNNMRAEYEDLAEQNREDAEAWFNEKSTSLHQQISDDAGAATAARNELMELKRNLQTLEIELQSLMAMKHSYECSLAETESNYCHQLQQIQEQIGATEDQLQQIRMETEGQKLEHERLLDVKIFLEKEIEMYCKLIDGEGRKSKSTYCKSEGRGPKNSENQVKDSKEEAVVKTVVGELDQLGSVLSLRVHSVEEKSSKISNITMEQRLPSKVPQ.

Residues 1 to 82 (MSFRLSSGSR…ENEHGLLPGN (82 aa)) form a head region. The interval 83 to 118 (EKVTLQNLNDRLASYLDHVCTLEEANADLEQKIKGW) is coil 1A. The 316-residue stretch at 83 to 398 (EKVTLQNLND…KLIDGEGRKS (316 aa)) folds into the IF rod domain. The tract at residues 119–140 (YEKYGPGSGRQLAYDCSKYFSV) is linker 1. The tract at residues 141–232 (TEDLKRQIIS…KNHQEEMKVM (92 aa)) is coil 1B. Residues 233 to 255 (QGAAGGNVNVEINAAPGVDLTVL) are linker 12. A coil 2 region spans residues 256–394 (LNNMRAEYED…EMYCKLIDGE (139 aa)). Residues 395–465 (GRKSKSTYCK…NITMEQRLPS (71 aa)) form a tail region. Disordered regions lie at residues 398 to 421 (SKST…KDSK) and 450 to 469 (KSSK…KVPQ). The span at 405-421 (SEGRGPKNSENQVKDSK) shows a compositional bias: basic and acidic residues.

This sequence belongs to the intermediate filament family. In terms of assembly, heterotetramer of two type I and two type II keratins.

In Bos taurus (Bovine), this protein is Keratin, type I cytoskeletal 26.